Consider the following 347-residue polypeptide: NADH-ubiquinone oxidoreductase chain 2 (347 aa).

Helical transmembrane passes span 13–33 (IFTG…WVGL), 60–80 (FLTQ…NSML), 96–116 (LMIM…FWVP), 123–143 (PLMS…SIMY), 149–169 (LNVN…SWGG), 178–198 (ILAY…PYNP), 201–221 (TILN…LLNL), 247–267 (TLLS…WVII), 274–294 (NSLI…YFYL), and 326–346 (LPTL…MLMI).

Belongs to the complex I subunit 2 family. Core subunit of respiratory chain NADH dehydrogenase (Complex I) which is composed of 45 different subunits. Interacts with TMEM242.

It is found in the mitochondrion inner membrane. It carries out the reaction a ubiquinone + NADH + 5 H(+)(in) = a ubiquinol + NAD(+) + 4 H(+)(out). Its function is as follows. Core subunit of the mitochondrial membrane respiratory chain NADH dehydrogenase (Complex I) which catalyzes electron transfer from NADH through the respiratory chain, using ubiquinone as an electron acceptor. Essential for the catalytic activity and assembly of complex I. The chain is NADH-ubiquinone oxidoreductase chain 2 from Pan troglodytes (Chimpanzee).